The following is a 455-amino-acid chain: CDP-diacylglycerol--serine O-phosphatidyltransferase (455 aa).

2 consecutive PLD phosphodiesterase domains span residues 134–160 and 356–383; these read VFGV…NNVY and GDNT…NPRA.

Belongs to the CDP-alcohol phosphatidyltransferase class-II family. In terms of assembly, multimeric.

The protein localises to the cytoplasm. Its subcellular location is the cell inner membrane. The enzyme catalyses a CDP-1,2-diacyl-sn-glycerol + L-serine = a 1,2-diacyl-sn-glycero-3-phospho-L-serine + CMP + H(+). This Haemophilus influenzae (strain ATCC 51907 / DSM 11121 / KW20 / Rd) protein is CDP-diacylglycerol--serine O-phosphatidyltransferase (pssA).